We begin with the raw amino-acid sequence, 470 residues long: GTPase grn1 (470 aa).

Residues 1–16 (MVSLKKKSKRRTTRLR) are compositionally biased toward basic residues. A disordered region spans residues 1-56 (MVSLKKKSKRRTTRLRSRIEKKAAESKRKQKRADKKNPQWKSRIPKDPGIPNSFPY). The span at 17–27 (SRIEKKAAESK) shows a compositional bias: basic and acidic residues. Residues 153–333 (DKEFKKVVEA…LVDSPGIVFP (181 aa)) enclose the CP-type G domain. GTP-binding positions include 202–205 (NKID), 276–283 (GYPNVGKS), and 326–329 (DSPG). Residues 405–415 (ARKRGRLGRGG) are RNA-binding.

This sequence belongs to the TRAFAC class YlqF/YawG GTPase family.

Its subcellular location is the nucleus. The protein resides in the nucleolus. In terms of biological role, required for optimal growth. Required for normal processing of ribosomal pre-rRNA. Required for nuclear export of ribosomal protein rpl2501. This chain is GTPase grn1, found in Schizosaccharomyces pombe (strain 972 / ATCC 24843) (Fission yeast).